Consider the following 337-residue polypeptide: Probable dual-specificity RNA methyltransferase RlmN (337 aa).

The active-site Proton acceptor is Glu-88. One can recognise a Radical SAM core domain in the interval 94 to 324; sequence SEKRLTVCVS…VRYSRGLATD (231 aa). Residues Cys-101 and Cys-327 are joined by a disulfide bond. Residues Cys-108, Cys-112, and Cys-115 each contribute to the [4Fe-4S] cluster site. S-adenosyl-L-methionine-binding positions include 155-156, Ser-185, 208-210, and Asn-284; these read GE and SLH. Cys-327 serves as the catalytic S-methylcysteine intermediate.

Belongs to the radical SAM superfamily. RlmN family. The cofactor is [4Fe-4S] cluster.

Its subcellular location is the cytoplasm. The catalysed reaction is adenosine(2503) in 23S rRNA + 2 reduced [2Fe-2S]-[ferredoxin] + 2 S-adenosyl-L-methionine = 2-methyladenosine(2503) in 23S rRNA + 5'-deoxyadenosine + L-methionine + 2 oxidized [2Fe-2S]-[ferredoxin] + S-adenosyl-L-homocysteine. It catalyses the reaction adenosine(37) in tRNA + 2 reduced [2Fe-2S]-[ferredoxin] + 2 S-adenosyl-L-methionine = 2-methyladenosine(37) in tRNA + 5'-deoxyadenosine + L-methionine + 2 oxidized [2Fe-2S]-[ferredoxin] + S-adenosyl-L-homocysteine. Functionally, specifically methylates position 2 of adenine 2503 in 23S rRNA and position 2 of adenine 37 in tRNAs. In Microcystis aeruginosa (strain NIES-843 / IAM M-2473), this protein is Probable dual-specificity RNA methyltransferase RlmN.